A 268-amino-acid chain; its full sequence is 5'-nucleotidase SurE (268 aa).

The a divalent metal cation site is built by Asp-8, Asp-9, Ser-40, and Asn-98.

The protein belongs to the SurE nucleotidase family. A divalent metal cation is required as a cofactor.

It localises to the cytoplasm. The enzyme catalyses a ribonucleoside 5'-phosphate + H2O = a ribonucleoside + phosphate. Its function is as follows. Nucleotidase that shows phosphatase activity on nucleoside 5'-monophosphates. The chain is 5'-nucleotidase SurE from Trichodesmium erythraeum (strain IMS101).